A 401-amino-acid polypeptide reads, in one-letter code: MKTLKDLGDLKGKRVLVRADFNVPLDGTTITDDGRIKAALPTIKTLREEGAKVILMAHLGRPKGKVVPELSLAPVAARLGELLGANVPLAKDTYGEDAQAKVAAMNDGDVVLLENVRFNPEETSKDADERAAYAKKIAALGEAFVSDGFGVVHRAQGSNYDVAADLPAAAGLLVEKEVKALSKATENPERPFTVVLGGSKVSDKLGVIENLLDKANRLVIGGGMVFTFLKAKGYEVGTSLLEEDQLEKVKGYIETAEKNGVELVLPTDVVVNAGFPAGDTPVAPEVVAADAIPADKMGLDIGPESQKLFHDKIVDSKTVVWNGPMGVFEVPEFAAGTKAVAQGLVDATAAGAFTIVGGGDSASAVRNLGFPEDGFSHISTGGGASLEFLEGKELPGLKVLE.

Residues 20–22 (DFN), Arg-35, 58–61 (HLGR), Arg-117, and Arg-154 contribute to the substrate site. ATP-binding positions include Lys-204, Gly-298, Glu-329, and 358 to 361 (GGDS).

This sequence belongs to the phosphoglycerate kinase family. In terms of assembly, monomer.

Its subcellular location is the cytoplasm. The enzyme catalyses (2R)-3-phosphoglycerate + ATP = (2R)-3-phospho-glyceroyl phosphate + ADP. Its pathway is carbohydrate degradation; glycolysis; pyruvate from D-glyceraldehyde 3-phosphate: step 2/5. The protein is Phosphoglycerate kinase of Bifidobacterium longum (strain DJO10A).